The sequence spans 312 residues: Olfactory receptor 10D3 (312 aa).

Over 1–26 the chain is Extracellular; that stretch reads MEVKNCCMVTEFILLGIPHTEGLEMT. Residues 27 to 47 form a helical membrane-spanning segment; sequence LFVLFLPFYACTLLGNVSILV. Topologically, residues 48-57 are cytoplasmic; it reads AVMSSARLHT. The helical transmembrane segment at 58–78 threads the bilayer; the sequence is PMYFFLGNLSVFDMGFSSVTC. At 79–97 the chain is on the extracellular side; the sequence is PKMLLYLMGLSRLISYKDC. Cys97 and Cys179 are disulfide-bonded. A helical membrane pass occupies residues 98 to 118; the sequence is VCQLFFFHFLGSIECFLFTVM. Residues 119 to 139 lie on the Cytoplasmic side of the membrane; sequence AYDRFTAICYPLRYTVIMNPR. A helical membrane pass occupies residues 140–160; the sequence is ICVALAVGTWLLGCIHSSILT. At 161–197 the chain is on the extracellular side; sequence SLTFTLPYCGPNEVDHFFCDIPALLPLACADTSLAQR. The chain crosses the membrane as a helical span at residues 198–218; sequence VSFTNVGLISLVCFLLILLSY. At 219–239 the chain is on the cytoplasmic side; the sequence is TRITISILSIRTTEGRRRAFS. A helical membrane pass occupies residues 240-260; it reads TCSAHLIAILCAYGPIITVYL. The Extracellular segment spans residues 261 to 266; the sequence is QPTPNP. A helical membrane pass occupies residues 267-287; the sequence is MLGTVVQILMNLVGPMLNPLI. Over 288–312 the chain is Cytoplasmic; that stretch reads YTLRNKEVKTALKTILHRTGHVPES.

It belongs to the G-protein coupled receptor 1 family.

It is found in the cell membrane. Odorant receptor. The protein is Olfactory receptor 10D3 of Homo sapiens (Human).